The chain runs to 66 residues: uncharacterized protein (66 aa).

The next 2 membrane-spanning stretches (helical) occupy residues 6–26 and 39–59; these read KIIM…HFVG and VTFF…SILL.

The protein resides in the cell membrane. This is an uncharacterized protein from Bacillus subtilis (strain 168).